Here is a 313-residue protein sequence, read N- to C-terminus: Syndecan-1 (313 aa).

The N-terminal stretch at 1-22 (MRRAALWLWLCALALRLQPALP) is a signal peptide. Topologically, residues 23-257 (QIVTANVPPE…GLLDRKEVLG (235 aa)) are extracellular. Disordered stretches follow at residues 27-58 (ANVP…MTLS) and 95-186 (AGEK…VEDG). Over residues 32–42 (EDQDGSGDDSD) the composition is skewed to acidic residues. O-linked (Xyl...) (chondroitin sulfate) serine glycosylation occurs at S37. N43 carries N-linked (GlcNAc...) asparagine glycosylation. Residues S45 and S47 are each glycosylated (O-linked (Xyl...) (heparan sulfate) serine). Residues 97-129 (EKPEEGEPVAHVEAEPDFTARDKEKEATTRPRE) show a composition bias toward basic and acidic residues. A compositionally biased stretch (low complexity) spans 135–154 (VTQQASTAARATTAQASVTS). Residues S209 and S219 are each glycosylated (O-linked (Xyl...) (chondroitin sulfate) serine). Residues 258–278 (GVIAGGLVGLIFAVCLVAFML) traverse the membrane as a helical segment. Over 279–313 (YRMKKKDEGSYSLEEPKQANGGAYQKPTKQEEFYA) the chain is Cytoplasmic. Basic and acidic residues predominate over residues 286-295 (EGSYSLEEPK). Residues 286–313 (EGSYSLEEPKQANGGAYQKPTKQEEFYA) form a disordered region. Position 288 is a phosphoserine (S288).

Belongs to the syndecan proteoglycan family. As to quaternary structure, interacts with CDCP1. Interacts (via C-terminus) with TIAM1 (via PDZ domain). Interacts with MDK. Shedding is enhanced by a number of factors such as heparanase, thrombin or EGF. Also by stress and wound healing. PMA-mediated shedding is inhibited by TIMP3.

Its subcellular location is the membrane. It localises to the secreted. The protein resides in the extracellular exosome. Functionally, cell surface proteoglycan that contains both heparan sulfate and chondroitin sulfate and that links the cytoskeleton to the interstitial matrix. Regulates exosome biogenesis in concert with SDCBP and PDCD6IP. Able to induce its own expression in dental mesenchymal cells and also in the neighboring dental epithelial cells via an MSX1-mediated pathway. The chain is Syndecan-1 from Rattus norvegicus (Rat).